Consider the following 667-residue polypeptide: Probable potassium transport system protein Kup (667 aa).

A run of 12 helical transmembrane segments spans residues 5-25 (GLLIAIGIVYGDIGTSPLYVM), 47-67 (ISLILWTVTLLTTVQTVIIAL), 88-108 (AAWLVWPALIGGAAILADGTL), 133-153 (VSNQTTVLVITIVILLVLFSI), 164-184 (AFGPIMLVWFAFLGVMGLINI), 210-230 (AGFAILGSIFLATTGAEALYS), 243-263 (SWPFVFVCLSLNYFGQGVWIL), 287-307 (LASIVLATLAAIIASQALITG), 336-356 (IYIPAVNKMLGITTIALVLFF), 367-387 (GLSITISMLTTTILLYEWLVL), 393-413 (LANLLFVIFFSTINILFMGSS), and 420-440 (GGYVSLLITLLIASVMVVWYF).

It belongs to the HAK/KUP transporter (TC 2.A.72) family.

Its subcellular location is the cell membrane. It catalyses the reaction K(+)(in) + H(+)(in) = K(+)(out) + H(+)(out). In terms of biological role, transport of potassium into the cell. Likely operates as a K(+):H(+) symporter. The polypeptide is Probable potassium transport system protein Kup (Lactobacillus delbrueckii subsp. bulgaricus (strain ATCC 11842 / DSM 20081 / BCRC 10696 / JCM 1002 / NBRC 13953 / NCIMB 11778 / NCTC 12712 / WDCM 00102 / Lb 14)).